A 160-amino-acid chain; its full sequence is Epithelial membrane protein 1 (160 aa).

Residues 1-21 (MLVLLAAIFVVHIATCVMLFV) form a helical membrane-spanning segment. N-linked (GlcNAc...) asparagine glycosylation is found at asparagine 35 and asparagine 43. Transmembrane regions (helical) follow at residues 67–87 (FMIL…FQLF), 95–115 (FFLS…GASI), and 137–157 (FILA…YLVL).

This sequence belongs to the PMP-22/EMP/MP20 family. In terms of tissue distribution, most abundant in squamous epithelia.

It localises to the membrane. This is Epithelial membrane protein 1 (EMP1) from Oryctolagus cuniculus (Rabbit).